Reading from the N-terminus, the 216-residue chain is UPF0502 protein Pmen_2627 (216 aa).

Belongs to the UPF0502 family.

This chain is UPF0502 protein Pmen_2627, found in Ectopseudomonas mendocina (strain ymp) (Pseudomonas mendocina).